A 183-amino-acid chain; its full sequence is Large ribosomal subunit protein uL5 (183 aa).

The protein belongs to the universal ribosomal protein uL5 family. As to quaternary structure, part of the 50S ribosomal subunit; part of the 5S rRNA/L5/L18/L25 subcomplex. Contacts the 5S rRNA and the P site tRNA. Forms a bridge to the 30S subunit in the 70S ribosome.

Functionally, this is one of the proteins that bind and probably mediate the attachment of the 5S RNA into the large ribosomal subunit, where it forms part of the central protuberance. In the 70S ribosome it contacts protein S13 of the 30S subunit (bridge B1b), connecting the 2 subunits; this bridge is implicated in subunit movement. Contacts the P site tRNA; the 5S rRNA and some of its associated proteins might help stabilize positioning of ribosome-bound tRNAs. The chain is Large ribosomal subunit protein uL5 from Tropheryma whipplei (strain TW08/27) (Whipple's bacillus).